Reading from the N-terminus, the 274-residue chain is Oxidoreductase stcQ (274 aa).

This sequence belongs to the avfA family.

Its pathway is mycotoxin biosynthesis; sterigmatocystin biosynthesis. In terms of biological role, oxidoreductase; part of the gene cluster that mediates the biosynthesis of sterigmatocystin (ST), a polyketide-derived furanocoumarin which is part of the most toxic and carcinogenic compounds among the known mycotoxins. The first step in the biosynthesis of sterigmatocystin is the production of hexanoate by the fatty acid synthase (FAS) units stcJ and stcK. The polyketide backbone is assembled by the non-reducing polyketide synthase stcA by condensation of the starter hexanoyl-CoA and 7 malonyl-CoA extender units followed by cyclization and release of norsolorinic acid. Norsolorinic acid is the first stable intermediate in the biosynthesis of sterigmatocystin and is converted into averantin (AVN) by the ketoreductase stcE which reduces the hexanoate ketone to an alcohol. Averantin is then oxidized into 5'-hydroxyaverantin (HAVN) by the cytochrome P450 monooxygenase stcF. 5'-hydroxyaverantin is further converted to 5'-oxyaverantin (OAVN) by the 5'-hydroxyaverantin dehydrogenase stcG. The next step is the conversion of OAVN into averufin (AVF) which is catalyzed by a yet to be identified enzyme. The cytochrome P450 monooxygenase stcB and the flavin-binding monooxygenase stcW are both required for the conversion of averufin to 1-hydroxyversicolorone. The esterase stcI probably catalyzes the formation of versiconal hemiacetal acetate from 1-hydroxyversicolorone. The oxydoreductase stcN then probably catalyzes the biosynthetic step from versiconal to versicolorin B (VERB). The next step is performed by the versicolorin B desaturase stcL to produce versicolorin A (VERA). The ketoreductase stcU and the cytochrome P450 monooxygenase stcS are involved in the conversion of versicolorin A to demethylsterigmatocystin. The Baeyer-Villiger oxidas stcQ and the reductase stcR might be involved in the biosynthetic step from versicolorin A to demethylsterigmatocystin. The final step in the biosynthesis of sterigmatocystin is the methylation of demethylsterigmatocystin catalyzed by the methyltransferase stcP. In Emericella nidulans (strain FGSC A4 / ATCC 38163 / CBS 112.46 / NRRL 194 / M139) (Aspergillus nidulans), this protein is Oxidoreductase stcQ.